The sequence spans 596 residues: Actin-histidine N-methyltransferase (596 aa).

The tract at residues 1 to 22 (MGKKSRVKTQKSGTGATATVSP) is disordered. Residues 10–20 (QKSGTGATATV) are compositionally biased toward polar residues. S-adenosyl-L-methionine is bound by residues arginine 75, 104-106 (EGF), arginine 254, 275-279 (DMCNH), and 325-327 (SGF). The 221-residue stretch at 94–314 (EGFEMVNFKE…AGDQIYIFYG (221 aa)) folds into the SET domain. Positions 551-596 (GLVNGESLIPNGTRSENESLSPEESENTTGDTEESSGSMDAVKERL) are disordered. Residues 571–584 (SPEESENTTGDTEE) are compositionally biased toward acidic residues.

Belongs to the class V-like SAM-binding methyltransferase superfamily. SETD3 actin-histidine methyltransferase family. Interacts with MYOD1. In terms of processing, phosphorylated by GSK3B, which is required for recognition by the SCF(FBXW7) complex and subsequent degradation. Ubiquitinated by the SCF(FBXW7) complex following phosphorylation by GSK3B, leading to its degradation by the proteasome.

It localises to the cytoplasm. Its subcellular location is the nucleus. The enzyme catalyses L-histidyl-[protein] + S-adenosyl-L-methionine = N(tele)-methyl-L-histidyl-[protein] + S-adenosyl-L-homocysteine + H(+). Its function is as follows. Protein-histidine N-methyltransferase that specifically mediates 3-methylhistidine (tele-methylhistidine) methylation of actin at 'His-73'. Histidine methylation of actin is required for smooth muscle contraction of the laboring uterus during delivery. Does not have protein-lysine N-methyltransferase activity and probably only catalyzes histidine methylation of actin. This is Actin-histidine N-methyltransferase from Rattus norvegicus (Rat).